An 86-amino-acid chain; its full sequence is Kappa-theraphotoxin-Cg1a 1 (86 aa).

A signal peptide spans 1-21 (MKVSVLITLAVLGVMFVWASA). Residues 22–50 (AELEERGSDQRDSPAWLKSMERIFQSGER) constitute a propeptide that is removed on maturation. Intrachain disulfides connect Cys-52–Cys-66, Cys-59–Cys-71, and Cys-65–Cys-78. The involved in active face stretch occupies residues 55–56 (MF). Position 84 is a phenylalanine amide (Phe-84).

The protein belongs to the neurotoxin 10 (Hwtx-1) family. 28 (Jztx-11) subfamily. Expressed by the venom gland.

It localises to the secreted. Functionally, this toxin acts as a voltage-dependent gating-modifier. It inhibits the sodium conductance (IC(50)=124 nM) and slows the fast inactivation (EC(50)=1180 nM) of Nav1.5/SCN5A. It significantly shifts the activation to more depolarized voltages and decreases the deactivation of Nav1.5 currents upon extreme depolarization, but only slightly affects voltage-dependence of steady-state inactivation. In addition, this toxin causes an approximately five-fold decrease in the rate of recovery from inactivation and an approximately 1.9-fold reduction in the closed-state inactivation rate. This toxin integrates the functions of site 3 toxins (alpha-scorpion toxins) with site 4 toxins (beta-scorpion and spider toxins) by targeting multiple sites on Nav1.5. Also shows inhibition of voltage-gated potassium channels (5 uM completely inhibits Kv2.1/KCNB1, whereas 5 uM moderately inhibits Kv4.2/KCND2 Kv4.1/KCND1 channels). This Chilobrachys guangxiensis (Chinese earth tiger tarantula) protein is Kappa-theraphotoxin-Cg1a 1.